A 340-amino-acid chain; its full sequence is Toxin coregulated pilus biosynthesis protein E (340 aa).

The next 3 membrane-spanning stretches (helical) occupy residues 108-131 (AISS…GYSV), 146-161 (WPGV…FSLY), and 312-333 (NISL…FSLV).

The protein belongs to the GSP F family.

Its subcellular location is the cell inner membrane. Functionally, probably involved in cholera toxin receptor (GM1) interaction in order to bring the cells within close proximity of the ganglioside for efficient toxin delivery. In Vibrio cholerae serotype O1 (strain ATCC 39315 / El Tor Inaba N16961), this protein is Toxin coregulated pilus biosynthesis protein E (tcpE).